The primary structure comprises 1111 residues: Probable arabinosyltransferase A (1111 aa).

Helical transmembrane passes span 12–34 (IIRL…VPLL), 205–224 (IAVG…LSAL), 333–355 (VWMR…HWVL), 370–387 (VAVL…LPFN), 394–413 (PLIA…AIAL), 423–445 (AVVA…ALLT), 462–484 (GLLA…VFHS), 530–547 (FPVL…VVLL), 554–576 (GLAS…LLTF), 581–603 (WAIQ…AFAF), 615–637 (TVYI…GWFG), 652–674 (IAGH…LAGG), and 695–717 (FLAT…GSLA). The disordered stretch occupies residues 804 to 831 (GLVNSDASPNKPNVTFSDSAGTAGGKGP). Polar residues predominate over residues 808-823 (SDASPNKPNVTFSDSA).

This sequence belongs to the emb family.

The protein resides in the cell membrane. Functionally, arabinosyl transferase responsible for the polymerization of arabinose into the arabinan of arabinogalactan. The protein is Probable arabinosyltransferase A (embA) of Mycobacterium leprae (strain TN).